The sequence spans 110 residues: Cytochrome subunit of sulfide dehydrogenase (110 aa).

Positions 1–16 (MLAAAPLLLASGNGFA) are cleaved as a signal peptide. Positions 41, 44, 45, and 83 each coordinate heme c.

In terms of assembly, dimer of one cytochrome and one flavoprotein. In terms of processing, binds 1 heme c group covalently per subunit.

The protein localises to the periplasm. Functionally, monoheme cytochrome that function as the electron transport subunit of sulfide dehydrogenase. This Chlorobaculum tepidum (strain ATCC 49652 / DSM 12025 / NBRC 103806 / TLS) (Chlorobium tepidum) protein is Cytochrome subunit of sulfide dehydrogenase (fccA).